The chain runs to 38 residues: Large ribosomal subunit protein bL36 (38 aa).

Belongs to the bacterial ribosomal protein bL36 family.

This is Large ribosomal subunit protein bL36 from Proteus mirabilis (strain HI4320).